Consider the following 395-residue polypeptide: S-adenosylmethionine synthase (395 aa).

His14 contributes to the ATP binding site. A Mg(2+)-binding site is contributed by Asp16. Glu42 is a binding site for K(+). The L-methionine site is built by Glu55 and Gln98. The tract at residues 98–108 (QSPDIALGVDK) is flexible loop. ATP-binding positions include 175-177 (DGK), 242-243 (RF), Asp251, 257-258 (RK), Ala274, and Lys278. Residue Asp251 coordinates L-methionine. Lys282 contributes to the L-methionine binding site.

This sequence belongs to the AdoMet synthase family. In terms of assembly, homotetramer; dimer of dimers. Mg(2+) is required as a cofactor. Requires K(+) as cofactor.

It is found in the cytoplasm. It catalyses the reaction L-methionine + ATP + H2O = S-adenosyl-L-methionine + phosphate + diphosphate. The protein operates within amino-acid biosynthesis; S-adenosyl-L-methionine biosynthesis; S-adenosyl-L-methionine from L-methionine: step 1/1. In terms of biological role, catalyzes the formation of S-adenosylmethionine (AdoMet) from methionine and ATP. The overall synthetic reaction is composed of two sequential steps, AdoMet formation and the subsequent tripolyphosphate hydrolysis which occurs prior to release of AdoMet from the enzyme. This chain is S-adenosylmethionine synthase, found in Thermosipho africanus (strain TCF52B).